The sequence spans 92 residues: Long neurotoxin 469 (92 aa).

Residues 1 to 21 (MKTLLLTLVVVTIVCLDLGDS) form the signal peptide. Disulfide bonds link cysteine 24-cysteine 41, cysteine 34-cysteine 62, cysteine 47-cysteine 51, cysteine 66-cysteine 77, and cysteine 78-cysteine 83.

Belongs to the three-finger toxin family. Long-chain subfamily. Type II alpha-neurotoxin sub-subfamily. As to expression, expressed by the venom gland.

The protein resides in the secreted. Its function is as follows. Binds with high affinity to muscular (alpha-1/CHRNA1) and neuronal (alpha-7/CHRNA7) nicotinic acetylcholine receptor (nAChR) and inhibits acetylcholine from binding to the receptor, thereby impairing neuromuscular and neuronal transmission. The chain is Long neurotoxin 469 from Drysdalia coronoides (White-lipped snake).